Reading from the N-terminus, the 169-residue chain is Heat shock protein beta-7 (169 aa).

The disordered stretch occupies residues 1–37 (MSHRTSSAFRAERSFRSSSSSSSSSSSSASRALPAQD). The tract at residues 1–70 (MSHRTSSAFR…PLAFPARPGG (70 aa)) is required for localization to SC35 splicing speckles. The span at 16–32 (RSSSSSSSSSSSSASRA) shows a compositional bias: low complexity. The 109-residue stretch at 61–169 (PLAFPARPGG…QQTFRTEIKI (109 aa)) folds into the sHSP domain.

It belongs to the small heat shock protein (HSP20) family. As to quaternary structure, interacts with C-terminal domain of actin-binding protein 280. As to expression, found in both cardiac and slow skeletal (soleus) muscle.

The protein resides in the cytoplasm. Its subcellular location is the nucleus. It is found in the cajal body. The chain is Heat shock protein beta-7 (Hspb7) from Mus musculus (Mouse).